The primary structure comprises 306 residues: Ribose-5-phosphate isomerase (306 aa).

The disordered stretch occupies residues 45 to 68 (GRAQFGVGSTSTSSGDANSVCPAP). Polar residues predominate over residues 51–61 (VGSTSTSSGDA). The residue at position 102 (Ser-102) is a Phosphoserine.

The protein belongs to the ribose 5-phosphate isomerase family.

The enzyme catalyses aldehydo-D-ribose 5-phosphate = D-ribulose 5-phosphate. The protein operates within carbohydrate degradation; pentose phosphate pathway; D-ribose 5-phosphate from D-ribulose 5-phosphate (non-oxidative stage): step 1/1. The chain is Ribose-5-phosphate isomerase from Sus scrofa (Pig).